Consider the following 250-residue polypeptide: Neurotrophic factor BDNF precursor form (250 aa).

The first 18 residues, 1 to 18 (MTILFLTMVISYFGCMKA), serve as a signal peptide directing secretion. The propeptide occupies 19–131 (APMKEANLRA…AANMSMRVRR (113 aa)). Cystine bridges form between Cys-144–Cys-211, Cys-189–Cys-240, and Cys-199–Cys-242.

The protein belongs to the NGF-beta family. Monomers and homodimers. Binds to NTRK2/TRKB. Can form heterodimers with other neurotrophin family members, such as NTF3 and NTF4 (in vitro), but the physiological relevance of this is not clear. BDNF precursor form: interacts with the heterodimer formed by NGFR and SORCS2. Mature BDNF has much lower affinity for the heterodimer formed by NGFR and SORCS2. Post-translationally, N-glycosylated and glycosulfated, contrary to mature BDNF. Mature BDNF is produced by proteolytic removal of the propeptide, catalyzed by a FURIN family member. In addition, the precursor form is proteolytically cleaved within the propeptide, but this is not an obligatory intermediate for the production of mature BDNF. Can be converted into mature BDNF by plasmin (PLG).

The protein resides in the secreted. Important signaling molecule that activates signaling cascades downstream of NTRK2. During development, promotes the survival and differentiation of selected neuronal populations of the peripheral and central nervous systems. Participates in axonal growth, pathfinding and in the modulation of dendritic growth and morphology. Major regulator of synaptic transmission and plasticity at adult synapses in many regions of the CNS. The versatility of BDNF is emphasized by its contribution to a range of adaptive neuronal responses including long-term potentiation (LTP), long-term depression (LTD), certain forms of short-term synaptic plasticity, as well as homeostatic regulation of intrinsic neuronal excitability. Functionally, important signaling molecule that activates signaling cascades downstream of NTRK2. Activates signaling cascades via the heterodimeric receptor formed by NGFR and SORCS2. Signaling via NGFR and SORCS2 plays a role in synaptic plasticity and long-term depression (LTD). Binding to NGFR and SORCS2 promotes neuronal apoptosis. Promotes neuronal growth cone collapse. The chain is Neurotrophic factor BDNF precursor form (BDNF) from Bos taurus (Bovine).